Consider the following 147-residue polypeptide: Probable cytidine deaminase (147 aa).

The CMP/dCMP-type deaminase domain maps to 4–130; that stretch reads EELEKCIDAA…KLLPGLFSQE (127 aa). 45–51 lines the substrate pocket; it reads NVENSSY. Residue Cys-56 participates in Zn(2+) binding. The active-site Proton donor is Glu-58. Cys-90 and Cys-93 together coordinate Zn(2+).

It belongs to the cytidine and deoxycytidylate deaminase family. Requires Zn(2+) as cofactor.

It carries out the reaction cytidine + H2O + H(+) = uridine + NH4(+). The catalysed reaction is 2'-deoxycytidine + H2O + H(+) = 2'-deoxyuridine + NH4(+). This enzyme scavenges exogenous and endogenous cytidine and 2'-deoxycytidine for UMP synthesis. This Dictyostelium discoideum (Social amoeba) protein is Probable cytidine deaminase (cda).